The primary structure comprises 148 residues: Fluoride-specific ion channel FluC 2 (148 aa).

Helical transmembrane passes span 23–43, 61–81, 92–112, and 120–140; these read LGHL…RLAV, GTLA…TLIF, FWVL…LHTL, and LLGG…ALAG. Gly-99 and Thr-102 together coordinate Na(+).

This sequence belongs to the fluoride channel Fluc/FEX (TC 1.A.43) family.

The protein resides in the cell membrane. The catalysed reaction is fluoride(in) = fluoride(out). Na(+) is not transported, but it plays an essential structural role and its presence is essential for fluoride channel function. In terms of biological role, fluoride-specific ion channel. Important for reducing fluoride concentration in the cell, thus reducing its toxicity. This Rubrobacter xylanophilus (strain DSM 9941 / JCM 11954 / NBRC 16129 / PRD-1) protein is Fluoride-specific ion channel FluC 2.